Here is a 193-residue protein sequence, read N- to C-terminus: Potassium-transporting ATPase KdpC subunit (193 aa).

Residues 7–27 (PLVVLFVVLTAVTGLAYPAVM) form a helical membrane-spanning segment.

It belongs to the KdpC family. The system is composed of three essential subunits: KdpA, KdpB and KdpC.

It is found in the cell inner membrane. Part of the high-affinity ATP-driven potassium transport (or Kdp) system, which catalyzes the hydrolysis of ATP coupled with the electrogenic transport of potassium into the cytoplasm. This subunit acts as a catalytic chaperone that increases the ATP-binding affinity of the ATP-hydrolyzing subunit KdpB by the formation of a transient KdpB/KdpC/ATP ternary complex. This chain is Potassium-transporting ATPase KdpC subunit, found in Burkholderia orbicola (strain MC0-3).